The following is a 414-amino-acid chain: Glycogen synthase (414 aa).

This sequence belongs to the glycosyltransferase group 1 family.

The enzyme catalyses [(1-&gt;4)-alpha-D-glucosyl](n) + UDP-alpha-D-glucose = [(1-&gt;4)-alpha-D-glucosyl](n+1) + UDP + H(+). It functions in the pathway glycan biosynthesis; glycogen biosynthesis. Glucosyltransferase that uses UDP-glucose as the sugar donor to elongate alpha-(1-&gt;4)-glucans. Is involved in the biosynthesis of both 6-O-methylglucosyl lipopolysaccharides (MGLP) and glycogen. May also use ADP-glucose as substrate. The protein is Glycogen synthase of Mycobacterium tuberculosis (strain CDC 1551 / Oshkosh).